Here is a 248-residue protein sequence, read N- to C-terminus: Neurovirulence factor ICP34.5 (248 aa).

Residues 1-14 (MARRRRHRGPRRPR) are compositionally biased toward basic residues. The interval 1–16 (MARRRRHRGPRRPRPP) is required for nucleolar localization. 2 disordered regions span residues 1 to 129 (MARR…FRLP) and 149 to 174 (RRAGGEGAPEPPATPATPATPATPAT). Polar residues predominate over residues 24–35 (TAQSQVTSTPNS). The span at 45–58 (AAPPPPPAGGPPPS) shows a compositional bias: pro residues. Residues 73 to 83 (ASDDDDDDDWP) are compositionally biased toward acidic residues. Pro residues-rich tracts occupy residues 84-93 (DSPPPEPAPE) and 119-128 (SHPPSRPFRL). Residues 128-137 (LPPRLALRLR) carry the Nuclear export signal motif. 5 consecutive repeat copies span residues 161-163 (ATP), 164-166 (ATP), 167-169 (ATP), 170-172 (ATP), and 173-175 (ATP). The 5 X 3 AA tandem repeats of A-T-P stretch occupies residues 161 to 175 (ATPATPATPATPATP). Positions 164-174 (ATPATPATPAT) are enriched in low complexity. Residues 175–188 (PARVRFSPHVRVRH) form a binding to PP1CA region. The tract at residues 175-188 (PARVRFSPHVRVRH) is interaction with host PPP1CA. The interval 190 to 248 (VVWASAARLARRGSWARERADRARFRRRVAEAEAVIGPCLGPEARARALARGAGPANSV) is important for interferon resistance. A Bipartite nuclear localization signal motif is present at residues 200–218 (RRGSWARERADRARFRRRV). Residues 218–233 (VAEAEAVIGPCLGPEA) are interaction with host EIF2S1/EIF-2ALPHA.

Belongs to the PPP1R15 family. In terms of assembly, interacts with host PPP1CA; this interaction forms a high-molecular-weight complex that dephosphorylates EIF2S1/eIF-2alpha. Interacts with host EIF2S1/eIF-2alpha; this interaction is crucial for the specific dephosphorylation of EIF2S1/eIF-2alpha by PPP1CA. Binds to proliferating cell nuclear antigen (PCNA), which may release host cells from growth arrest and facilitate viral replication. Interacts (via N-terminus) with host C1QBP; this interaction allows C1QBP to be recruited to the inner nuclear membrane by ICP34.5. Interacts with host PRKCA. Interacts with protein UL31. Interacts with host STING/TMEM173; this interaction inhibits the intracellular DNA sensing pathway. Interacts with host BECN1; this interaction modulates host autophagy.

It is found in the host cytoplasm. Its subcellular location is the host nucleus. The protein localises to the host nucleolus. It localises to the virion. Its function is as follows. Inhibits the establishment of the immune response and of the integrated stress response (ISR) in the infected cell. Plays essential roles in viral nuclear egress to mediate capsid transit across the nuclear membrane. Facilitates nuclear egress cooperatively with host C1QBP and protein kinase C/PKC to induce lamin A/C phosphorylation and subsequent reorganization. In turn, lamina disassembles and nuclear egress occurs. Recruits the serine/threonine protein phosphatase PPP1CA/PP1-alpha to dephosphorylate the translation initiation factor EIF2S1/eIF-2alpha, thereby couteracting the host shutoff of protein synthesis involving double-stranded RNA-dependent protein kinase EIF2AK2/PKR. In turn, controls host IRF3 activation and subsequently inhibits host interferon response. Controls the DNA sensing pathway by interacting with and inhibiting host STING/TMEM173. Also down-modulates the host MHC class II proteins cell surface expression. Acts as a neurovirulence factor that has a profound effect on the growth of the virus in central nervous system tissue, by interacting with host BECN1 and thereby antagonizing the host autophagy response. This Homo sapiens (Human) protein is Neurovirulence factor ICP34.5 (ICP34.5).